Reading from the N-terminus, the 81-residue chain is ATP synthase subunit c, chloroplastic (81 aa).

2 helical membrane passes run 7–27 and 57–77; these read AASVIAAGLSVGLASIGPGIG and LAFMEALTIYGLVVALALLFA.

Belongs to the ATPase C chain family. F-type ATPases have 2 components, F(1) - the catalytic core - and F(0) - the membrane proton channel. F(1) has five subunits: alpha(3), beta(3), gamma(1), delta(1), epsilon(1). F(0) has four main subunits: a(1), b(1), b'(1) and c(10-14). The alpha and beta chains form an alternating ring which encloses part of the gamma chain. F(1) is attached to F(0) by a central stalk formed by the gamma and epsilon chains, while a peripheral stalk is formed by the delta, b and b' chains.

It is found in the plastid. It localises to the chloroplast thylakoid membrane. F(1)F(0) ATP synthase produces ATP from ADP in the presence of a proton or sodium gradient. F-type ATPases consist of two structural domains, F(1) containing the extramembraneous catalytic core and F(0) containing the membrane proton channel, linked together by a central stalk and a peripheral stalk. During catalysis, ATP synthesis in the catalytic domain of F(1) is coupled via a rotary mechanism of the central stalk subunits to proton translocation. Its function is as follows. Key component of the F(0) channel; it plays a direct role in translocation across the membrane. A homomeric c-ring of between 10-14 subunits forms the central stalk rotor element with the F(1) delta and epsilon subunits. The polypeptide is ATP synthase subunit c, chloroplastic (Cryptomeria japonica (Japanese cedar)).